A 415-amino-acid chain; its full sequence is Serine hydroxymethyltransferase (415 aa).

(6S)-5,6,7,8-tetrahydrofolate is bound by residues L117 and 121-123 (GHL). K226 carries the N6-(pyridoxal phosphate)lysine modification.

The protein belongs to the SHMT family. In terms of assembly, homodimer. It depends on pyridoxal 5'-phosphate as a cofactor.

It localises to the cytoplasm. It catalyses the reaction (6R)-5,10-methylene-5,6,7,8-tetrahydrofolate + glycine + H2O = (6S)-5,6,7,8-tetrahydrofolate + L-serine. The protein operates within one-carbon metabolism; tetrahydrofolate interconversion. It functions in the pathway amino-acid biosynthesis; glycine biosynthesis; glycine from L-serine: step 1/1. In terms of biological role, catalyzes the reversible interconversion of serine and glycine with tetrahydrofolate (THF) serving as the one-carbon carrier. This reaction serves as the major source of one-carbon groups required for the biosynthesis of purines, thymidylate, methionine, and other important biomolecules. Also exhibits THF-independent aldolase activity toward beta-hydroxyamino acids, producing glycine and aldehydes, via a retro-aldol mechanism. The protein is Serine hydroxymethyltransferase of Leptospira interrogans serogroup Icterohaemorrhagiae serovar copenhageni (strain Fiocruz L1-130).